The primary structure comprises 556 residues: MTINNYDYDYLIIGSGFGGSVSACRLTEKGYSVAVMEMGRRWKAEDFAKNNWNTRRWIWRPGMKLFGYFNMRFFRHVTIICGNAVGGGSITYANTLLVPPEHIWDEGTWADAADWKNEMPQHYAEAERMLGVTDNKIFGPADHMLKKMGEAVGVGHTFKPTRVATFFPPEGEEGGKTYPDPYFNGEGPDRGTCTACGGCMTGCKHNAKNTLDKNYLYFAEKNGAKVYEETKVVDVKPLNGKADGSDGYEVTTGCSSSWFNKQRRTWRVRNVIFSASSLGTQEMLFRLKQSGSLPNISDDLGNRVRTNAESILGVRFFGKDVDMSKGVAIGSSIYIDHDTHIEATRYQSGSDAMGLMCTYMAKGKPGWTRIFFWLWALICHPFIFLRMSNPVSFARQTLIFLVMQTADASINMRLKRNWFWPFGKVLSSEGKKLPVYIPQANAFTEKVAKMFNGHPMTTITEILFNVPFTAHCMGGCAIASSPERGVVDGQNRVFNYKNLYVVDGSMLGANLGVNPSLTITALAERAMSYIPAKHTLEEQAYTQTHNEVLEAAKVSA.

Positions 18, 37, 88, 93, and 235 each coordinate FAD. Residue histidine 471 is the Proton acceptor of the active site. Residue glycine 504 coordinates FAD.

This sequence belongs to the GMC oxidoreductase family. The cofactor is FAD.

The enzyme catalyses cholesterol + O2 = cholest-5-en-3-one + H2O2. The catalysed reaction is cholest-5-en-3-one = cholest-4-en-3-one. The protein operates within steroid metabolism; cholesterol degradation. Bifunctional enzyme that catalyzes the oxidation and isomerization of cholesterol to cholestenone (cholest-4-en-3-one), an initial step in the cholesterol degradation process. This is Cholesterol oxidase from Acinetobacter baumannii.